A 525-amino-acid chain; its full sequence is BTB/POZ domain-containing protein At1g50280 (525 aa).

In terms of domain architecture, BTB spans N5–D79. In terms of domain architecture, NPH3 spans E200–N466.

It belongs to the NPH3 family.

Its pathway is protein modification; protein ubiquitination. Functionally, may act as a substrate-specific adapter of an E3 ubiquitin-protein ligase complex (CUL3-RBX1-BTB) which mediates the ubiquitination and subsequent proteasomal degradation of target proteins. The sequence is that of BTB/POZ domain-containing protein At1g50280 from Arabidopsis thaliana (Mouse-ear cress).